We begin with the raw amino-acid sequence, 407 residues long: Lysosomal phospholipase A and acyltransferase (407 aa).

An N-terminal signal peptide occupies residues 1–29; that stretch reads MGCLCLYRSTLLTGGLLFLLMLADPAFPA. Residue Asp41 participates in substrate binding. A disulfide bridge links Cys60 with Cys84. N-linked (GlcNAc...) asparagine glycosylation is present at Asn94. The Acyl-ester intermediate role is filled by Ser193. Ser193 contributes to the Zn(2+) binding site. Met194 provides a ligand contact to substrate. Asn284 carries an N-linked (GlcNAc...) asparagine glycan. Active-site charge relay system residues include Asp355 and His387. Residue His387 coordinates Zn(2+). A glycan (N-linked (GlcNAc...) asparagine) is linked at Asn393.

The protein belongs to the AB hydrolase superfamily. Lipase family. In terms of processing, N-glycosylated. Post-translationally, N-glycosylated. N-glycosylation is important for maturation of the enzyme and normal subcellular location. In terms of tissue distribution, detected in brain (at protein level).

It localises to the lysosome. The protein localises to the secreted. Its subcellular location is the membrane. The enzyme catalyses a 1,2-diacyl-sn-glycero-3-phosphocholine + H2O = a 2-acyl-sn-glycero-3-phosphocholine + a fatty acid + H(+). The catalysed reaction is 1-hexadecanoyl-2-(9Z-octadecenoyl)-sn-glycero-3-phosphocholine + H2O = 2-(9Z-octadecenoyl)-sn-glycero-3-phosphocholine + hexadecanoate + H(+). It catalyses the reaction 1,2-di-(9Z-octadecenoyl)-sn-glycero-3-phosphocholine + H2O = 2-(9Z-octadecenoyl)-sn-glycero-3-phosphocholine + (9Z)-octadecenoate + H(+). It carries out the reaction 1-hexadecanoyl-2-glutaroyl-sn-glycero-3-phosphocholine + H2O = 2-glutaroyl-sn-glycero-3-phosphocholine + hexadecanoate + H(+). The enzyme catalyses 1-hexadecanoyl-2-nonadioyl-sn-glycero-3-phosphocholine + H2O = 2-nonadioyl-sn-glycero-3-phosphocholine + hexadecanoate + H(+). The catalysed reaction is 1-hexadecanoyl-2-(5-oxopentanoyl)-sn-glycero-3-phosphocholine + H2O = 2-(5-oxopentanoyl)-sn-glycero-3-phosphocholine + hexadecanoate + H(+). It catalyses the reaction 1-hexadecanoyl-2-(9-oxononanoyl)-sn-glycero-3-phosphocholine + H2O = 2-(9-oxononanoyl)-sn-glycero-3-phosphocholine + hexadecanoate + H(+). It carries out the reaction 1,2-dihexadecanoyl-sn-glycero-3-phosphocholine + H2O = 2-hexadecanoyl-sn-glycero-3-phosphocholine + hexadecanoate + H(+). The enzyme catalyses a 1,2-diacyl-sn-glycero-3-phosphocholine + H2O = a 1-acyl-sn-glycero-3-phosphocholine + a fatty acid + H(+). The catalysed reaction is 1-hexadecanoyl-2-(9Z-octadecenoyl)-sn-glycero-3-phosphocholine + H2O = 1-hexadecanoyl-sn-glycero-3-phosphocholine + (9Z)-octadecenoate + H(+). It catalyses the reaction 1,2-di-(9Z-octadecenoyl)-sn-glycero-3-phosphocholine + H2O = 1-(9Z-octadecenoyl)-sn-glycero-3-phosphocholine + (9Z)-octadecenoate + H(+). It carries out the reaction 1,2-dihexadecanoyl-sn-glycero-3-phosphocholine + H2O = 1-hexadecanoyl-sn-glycero-3-phosphocholine + hexadecanoate + H(+). The enzyme catalyses a 1-acyl-sn-glycero-3-phosphocholine + H2O = sn-glycerol 3-phosphocholine + a fatty acid + H(+). The catalysed reaction is 1-hexadecanoyl-sn-glycero-3-phosphocholine + H2O = sn-glycerol 3-phosphocholine + hexadecanoate + H(+). It catalyses the reaction N-(acetyl)-sphing-4-enine + a 1,2-diacyl-sn-glycero-3-phosphoethanolamine = 1-O-acyl-N-(acetyl)-sphing-4-enine + a 2-acyl-sn-glycero-3-phosphoethanolamine. It carries out the reaction 1-hexadecanoyl-2-(9Z-octadecenoyl)-sn-glycero-3-phosphoethanolamine + N-(acetyl)-sphing-4-enine = 2-(9Z-octadecenoyl)-sn-glycero-3-phosphoethanolamine + 1-hexadecanoyl-N-(acetyl)-sphing-4-enine. The enzyme catalyses 1-hexadecanoyl-2-(9Z,12Z-octadecadienoyl)-sn-glycero-3-phosphoethanolamine + N-(acetyl)-sphing-4-enine = 2-(9Z,12Z)-octadecadienoyl-sn-glycero-3-phosphoethanolamine + 1-hexadecanoyl-N-(acetyl)-sphing-4-enine. The catalysed reaction is 1-hexadecanoyl-2-(5Z,8Z,11Z,14Z-eicosatetraenoyl)-sn-glycero-3-phosphoethanolamine + N-(acetyl)-sphing-4-enine = 2-(5Z,8Z,11Z,14Z)-eicosatetraenoyl-sn-glycero-3-phosphoethanolamine + 1-hexadecanoyl-N-(acetyl)-sphing-4-enine. It catalyses the reaction N-(acetyl)-sphing-4-enine + a 1,2-diacyl-sn-glycero-3-phosphoethanolamine = 1-O-acyl-N-(acetyl)-sphing-4-enine + a 1-acyl-sn-glycero-3-phosphoethanolamine. It carries out the reaction 1-hexadecanoyl-2-(9Z-octadecenoyl)-sn-glycero-3-phosphoethanolamine + N-(acetyl)-sphing-4-enine = 1-(9Z-octadecenoyl)-N-(acetyl)-sphing-4-enine + 1-hexadecanoyl-sn-glycero-3-phosphoethanolamine. The enzyme catalyses 1-hexadecanoyl-2-(9Z,12Z-octadecadienoyl)-sn-glycero-3-phosphoethanolamine + N-(acetyl)-sphing-4-enine = 1-(9Z,12Z-octadecadienoyl)-N-acetylsphing-4-enine + 1-hexadecanoyl-sn-glycero-3-phosphoethanolamine. The catalysed reaction is 1-hexadecanoyl-2-(5Z,8Z,11Z,14Z-eicosatetraenoyl)-sn-glycero-3-phosphoethanolamine + N-(acetyl)-sphing-4-enine = 1-(5Z,8Z,11Z,14Z)-eicosatetraenoyl-N-(acetyl)-sphing-4-enine + 1-hexadecanoyl-sn-glycero-3-phosphoethanolamine. It catalyses the reaction N-(acetyl)-sphing-4-enine + a 1,2-diacyl-sn-glycero-3-phosphocholine = 1-O-acyl-N-(acetyl)-sphing-4-enine + a 2-acyl-sn-glycero-3-phosphocholine. It carries out the reaction 1-hexadecanoyl-2-(9Z-octadecenoyl)-sn-glycero-3-phosphocholine + N-(acetyl)-sphing-4-enine = 1-hexadecanoyl-N-(acetyl)-sphing-4-enine + 2-(9Z-octadecenoyl)-sn-glycero-3-phosphocholine. The enzyme catalyses 1-hexadecanoyl-2-(9Z,12Z-octadecadienoyl)-sn-glycero-3-phosphocholine + N-(acetyl)-sphing-4-enine = 2-(9Z,12Z-octadecadienoyl)-sn-glycero-3-phosphocholine + 1-hexadecanoyl-N-(acetyl)-sphing-4-enine. The catalysed reaction is 1-hexadecanoyl-2-(5Z,8Z,11Z,14Z-eicosatetraenoyl)-sn-glycero-3-phosphocholine + N-(acetyl)-sphing-4-enine = 1-hexadecanoyl-N-(acetyl)-sphing-4-enine + 2-(5Z,8Z,11Z,14Z)-eicosatetraenoyl-sn-glycero-3-phosphocholine. It catalyses the reaction 1-hexadecanoyl-2-(4Z,7Z,10Z,13Z,16Z,19Z-docosahexaenoyl)-sn-glycero-3-phosphocholine + N-(acetyl)-sphing-4-enine = 2-(4Z,7Z,10Z,13Z,16Z,19Z-docosahexaenoyl)-sn-glycero-3-phosphocholine + 1-hexadecanoyl-N-(acetyl)-sphing-4-enine. It carries out the reaction 1-hexadecanoyl-2-nonadioyl-sn-glycero-3-phosphocholine + N-(acetyl)-sphing-4-enine = 2-nonadioyl-sn-glycero-3-phosphocholine + 1-hexadecanoyl-N-(acetyl)-sphing-4-enine. The enzyme catalyses 1-octadecanoyl-2-(9Z-octadecenoyl)-sn-glycero-3-phosphocholine + N-(acetyl)-sphing-4-enine = 1-octadecanoyl-N-(acetyl)-sphing-4-enine + 2-(9Z-octadecenoyl)-sn-glycero-3-phosphocholine. The catalysed reaction is 1-(9Z)-octadecenoyl-2-octadecanoyl-sn-glycero-3-phosphocholine + N-(acetyl)-sphing-4-enine = 2-octadecanoyl-sn-glycero-3-phosphocholine + 1-(9Z-octadecenoyl)-N-(acetyl)-sphing-4-enine. It catalyses the reaction 1-octadecanoyl-2-(5Z,8Z,11Z,14Z-eicosatetraenoyl)-sn-glycero-3-phosphocholine + N-(acetyl)-sphing-4-enine = 1-octadecanoyl-N-(acetyl)-sphing-4-enine + 2-(5Z,8Z,11Z,14Z)-eicosatetraenoyl-sn-glycero-3-phosphocholine. It carries out the reaction 1-(9Z-octadecenoyl)-2-hexadecanoyl-sn-glycero-3-phosphocholine + N-(acetyl)-sphing-4-enine = 1-(9Z-octadecenoyl)-N-(acetyl)-sphing-4-enine + 2-hexadecanoyl-sn-glycero-3-phosphocholine. The enzyme catalyses N-(acetyl)-sphing-4-enine + a 1,2-diacyl-sn-glycero-3-phosphocholine = 1-O-acyl-N-(acetyl)-sphing-4-enine + a 1-acyl-sn-glycero-3-phosphocholine. The catalysed reaction is 1-hexadecanoyl-2-(9Z-octadecenoyl)-sn-glycero-3-phosphocholine + N-(acetyl)-sphing-4-enine = 1-(9Z-octadecenoyl)-N-(acetyl)-sphing-4-enine + 1-hexadecanoyl-sn-glycero-3-phosphocholine. It catalyses the reaction 1-hexadecanoyl-2-(9Z,12Z-octadecadienoyl)-sn-glycero-3-phosphocholine + N-(acetyl)-sphing-4-enine = 1-(9Z,12Z-octadecadienoyl)-N-acetylsphing-4-enine + 1-hexadecanoyl-sn-glycero-3-phosphocholine. It carries out the reaction 1-hexadecanoyl-2-(5Z,8Z,11Z,14Z-eicosatetraenoyl)-sn-glycero-3-phosphocholine + N-(acetyl)-sphing-4-enine = 1-(5Z,8Z,11Z,14Z)-eicosatetraenoyl-N-(acetyl)-sphing-4-enine + 1-hexadecanoyl-sn-glycero-3-phosphocholine. The enzyme catalyses 1-hexadecanoyl-2-(4Z,7Z,10Z,13Z,16Z,19Z-docosahexaenoyl)-sn-glycero-3-phosphocholine + N-(acetyl)-sphing-4-enine = 1-(4Z,7Z,10Z,13Z,16Z,19Z-docosahexaenoyl)-N-(acetyl)-sphing-4-enine + 1-hexadecanoyl-sn-glycero-3-phosphocholine. The catalysed reaction is 1-octadecanoyl-2-(9Z-octadecenoyl)-sn-glycero-3-phosphocholine + N-(acetyl)-sphing-4-enine = 1-(9Z-octadecenoyl)-N-(acetyl)-sphing-4-enine + 1-octadecanoyl-sn-glycero-3-phosphocholine. It catalyses the reaction 1-octadecanoyl-2-(9Z,12Z)-octadecadienoyl-sn-glycero-3-phosphocholine + N-(acetyl)-sphing-4-enine = 1-(9Z,12Z-octadecadienoyl)-N-acetylsphing-4-enine + 1-octadecanoyl-sn-glycero-3-phosphocholine. It carries out the reaction 1-(9Z-octadecenoyl)-2-hexadecanoyl-sn-glycero-3-phosphocholine + N-(acetyl)-sphing-4-enine = 1-hexadecanoyl-N-(acetyl)-sphing-4-enine + 1-(9Z-octadecenoyl)-sn-glycero-3-phosphocholine. The enzyme catalyses 1-(9Z)-octadecenoyl-2-octadecanoyl-sn-glycero-3-phosphocholine + N-(acetyl)-sphing-4-enine = 1-octadecanoyl-N-(acetyl)-sphing-4-enine + 1-(9Z-octadecenoyl)-sn-glycero-3-phosphocholine. The catalysed reaction is 1,2-di-(9Z-octadecenoyl)-sn-glycero-3-phosphocholine + N-(acetyl)-sphing-4-enine = 1-(9Z-octadecenoyl)-N-(acetyl)-sphing-4-enine + 1-(9Z-octadecenoyl)-sn-glycero-3-phosphocholine. It catalyses the reaction 1-octadecanoyl-2-(5Z,8Z,11Z,14Z-eicosatetraenoyl)-sn-glycero-3-phosphocholine + N-(acetyl)-sphing-4-enine = 1-(5Z,8Z,11Z,14Z)-eicosatetraenoyl-N-(acetyl)-sphing-4-enine + 1-octadecanoyl-sn-glycero-3-phosphocholine. It carries out the reaction a 1,2-diacyl-sn-glycero-3-phospho-L-serine + N-(acetyl)-sphing-4-enine = a 2-acyl-sn-glycero-3-phospho-L-serine + 1-O-acyl-N-(acetyl)-sphing-4-enine. The enzyme catalyses 1-octadecanoyl-2-(9Z-octadecenoyl)-sn-glycero-3-phospho-L-serine + N-(acetyl)-sphing-4-enine = 2-(9Z-octadecenoyl)-sn-glycero-3-phospho-L-serine + 1-octadecanoyl-N-(acetyl)-sphing-4-enine. The catalysed reaction is a 1,2-diacyl-sn-glycero-3-phospho-L-serine + N-(acetyl)-sphing-4-enine = 1-O-acyl-N-(acetyl)-sphing-4-enine + a 1-acyl-sn-glycero-3-phospho-L-serine. It catalyses the reaction 1-octadecanoyl-2-(9Z-octadecenoyl)-sn-glycero-3-phospho-L-serine + N-(acetyl)-sphing-4-enine = 1-octadecanoyl-sn-glycero-3-phosphoserine + 1-(9Z-octadecenoyl)-N-(acetyl)-sphing-4-enine. It carries out the reaction a 1,2-diacyl-sn-glycero-3-phospho-(1'-sn-glycerol) + N-(acetyl)-sphing-4-enine = 2-acyl-sn-glycero-3-phospho-(1'-sn-glycerol) + 1-O-acyl-N-(acetyl)-sphing-4-enine. The enzyme catalyses 1-octadecanoyl-2-(9Z-octadecenoyl)-sn-glycero-3-phospho-(1'-sn-glycerol) + N-(acetyl)-sphing-4-enine = 2-(9Z-octadecenoyl)-sn-glycero-3-phospho-(1'-sn-glycerol) + 1-octadecanoyl-N-(acetyl)-sphing-4-enine. The catalysed reaction is a 1,2-diacyl-sn-glycero-3-phospho-(1'-sn-glycerol) + N-(acetyl)-sphing-4-enine = 1-O-acyl-N-(acetyl)-sphing-4-enine + 1-acyl-sn-glycero-3-phospho-(1'-sn-glycerol). It catalyses the reaction 1-octadecanoyl-2-(9Z-octadecenoyl)-sn-glycero-3-phospho-(1'-sn-glycerol) + N-(acetyl)-sphing-4-enine = 1-octadecanoyl-sn-glycero-3-phospho-(1'-sn-glycerol) + 1-(9Z-octadecenoyl)-N-(acetyl)-sphing-4-enine. It carries out the reaction an N-acylethanolamine + a 1,2-diacyl-sn-glycero-3-phosphocholine = 2-(acylamino)ethyl fatty acid + a 2-acyl-sn-glycero-3-phosphocholine. The enzyme catalyses an N-acylethanolamine + a 1,2-diacyl-sn-glycero-3-phosphocholine = 2-(acylamino)ethyl fatty acid + a 1-acyl-sn-glycero-3-phosphocholine. The catalysed reaction is N-(5Z,8Z,11Z,14Z-eicosatetraenoyl)-ethanolamine + 1,2-di-(9Z-octadecenoyl)-sn-glycero-3-phosphocholine = 2-[(5Z,8Z,11Z,14Z)-eicosatetraenoylamino]ethyl (9Z)-octadecenoate + (9Z-octadecenoyl)-sn-glycero-3-phosphocholine. It catalyses the reaction N-(9Z-octadecenoyl) ethanolamine + 1,2-di-(9Z-octadecenoyl)-sn-glycero-3-phosphocholine = 2-[(9Z)-octadecenoylamino]ethyl (9Z)-octadecenoate + (9Z-octadecenoyl)-sn-glycero-3-phosphocholine. It carries out the reaction a 3-acyl-sn-glycerol + a 1,2-diacyl-sn-glycero-3-phosphocholine = a 1,3-diacylglycerol + a 1-acyl-sn-glycero-3-phosphocholine. The enzyme catalyses a 3-acyl-sn-glycerol + a 1,2-diacyl-sn-glycero-3-phosphocholine = a 1,3-diacylglycerol + a 2-acyl-sn-glycero-3-phosphocholine. The catalysed reaction is 3-(9Z-octadecenoyl)-sn-glycerol + 1,2-di-(9Z-octadecenoyl)-sn-glycero-3-phosphocholine = 1,3-di-(9Z-octadecenoyl)-glycerol + (9Z-octadecenoyl)-sn-glycero-3-phosphocholine. It catalyses the reaction 3-hexadecanoyl-sn-glycerol + 1,2-di-(9Z-octadecenoyl)-sn-glycero-3-phosphocholine = 1-(9Z)-octadecenoyl-3-hexadecanoyl-sn-glycerol + (9Z-octadecenoyl)-sn-glycero-3-phosphocholine. It carries out the reaction a 1-acyl-sn-glycerol + a 1,2-diacyl-sn-glycero-3-phosphocholine = a 1,3-diacylglycerol + a 2-acyl-sn-glycero-3-phosphocholine. The enzyme catalyses a 1-acyl-sn-glycerol + a 1,2-diacyl-sn-glycero-3-phosphocholine = a 1,3-diacylglycerol + a 1-acyl-sn-glycero-3-phosphocholine. The catalysed reaction is 1-(9Z-octadecenoyl)-sn-glycerol + 1,2-di-(9Z-octadecenoyl)-sn-glycero-3-phosphocholine = 1,3-di-(9Z-octadecenoyl)-glycerol + (9Z-octadecenoyl)-sn-glycero-3-phosphocholine. It catalyses the reaction 1-hexadecanoyl-sn-glycerol + 1,2-di-(9Z-octadecenoyl)-sn-glycero-3-phosphocholine = 1-hexadecanoyl-3-(9Z)-octadecenoyl-sn-glycerol + (9Z-octadecenoyl)-sn-glycero-3-phosphocholine. It carries out the reaction a 2-acylglycerol + a 1,2-diacyl-sn-glycero-3-phosphocholine = a 1,2-diacylglycerol + a 2-acyl-sn-glycero-3-phosphocholine. The enzyme catalyses a 2-acylglycerol + a 1,2-diacyl-sn-glycero-3-phosphocholine = a 1,2-diacylglycerol + a 1-acyl-sn-glycero-3-phosphocholine. The catalysed reaction is 2-hexadecanoylglycerol + 1,2-di-(9Z-octadecenoyl)-sn-glycero-3-phosphocholine = 1-(9Z)-octadecenoyl-2-hexadecanoylglycerol + (9Z-octadecenoyl)-sn-glycero-3-phosphocholine. It catalyses the reaction 1-O-alkylglycerol + a 1,2-diacyl-sn-glycero-3-phosphocholine = 1-O-alkyl-3-acylglycerol + a 1-acyl-sn-glycero-3-phosphocholine. It carries out the reaction 1-O-alkylglycerol + a 1,2-diacyl-sn-glycero-3-phosphocholine = 1-O-alkyl-3-acylglycerol + a 2-acyl-sn-glycero-3-phosphocholine. The enzyme catalyses 1-O-hexadecylglycerol + 1,2-di-(9Z-octadecenoyl)-sn-glycero-3-phosphocholine = 1-O-hexadecyl-3-(9Z)-octadecenoylglycerol + (9Z-octadecenoyl)-sn-glycero-3-phosphocholine. The catalysed reaction is 1-O-alkyl-2-acyl-sn-glycerol + a 1,2-diacyl-sn-glycero-3-phosphocholine = 1-O-alkyl-2,3-diacyl-sn-glycerol + a 2-acyl-sn-glycero-3-phosphocholine. It catalyses the reaction 1-O-alkyl-2-acyl-sn-glycerol + a 1,2-diacyl-sn-glycero-3-phosphocholine = 1-O-alkyl-2,3-diacyl-sn-glycerol + a 1-acyl-sn-glycero-3-phosphocholine. It carries out the reaction 1-O-hexadecyl-2-acetyl-sn-glycerol + 1,2-di-(9Z-octadecenoyl)-sn-glycero-3-phosphocholine = 1-O-hexadecyl-2-acetyl-3-(9Z)-octadecenoyl-sn-glycerol + (9Z-octadecenoyl)-sn-glycero-3-phosphocholine. The enzyme catalyses 1-O-hexadecyl-2-O-methyl-sn-glycerol + 1,2-di-(9Z-octadecenoyl)-sn-glycero-3-phosphocholine = 1-O-hexadecyl-2-O-methyl-3-(9Z)-octadecenoyl-sn-glycerol + (9Z-octadecenoyl)-sn-glycero-3-phosphocholine. The catalysed reaction is a 1,2-diacyl-sn-glycero-3-phosphoethanolamine + H2O = a 1-acyl-sn-glycero-3-phosphoethanolamine + a fatty acid + H(+). It catalyses the reaction 1-acyl-2-(5Z,8Z,11Z,14Z)-eicosatetraenoyl-sn-glycero-3-phosphoethanolamine + H2O = a 1-acyl-sn-glycero-3-phosphoethanolamine + (5Z,8Z,11Z,14Z)-eicosatetraenoate + H(+). It carries out the reaction a 1,2-diacyl-sn-glycero-3-phospho-(1'-sn-glycerol) + H2O = 1-acyl-sn-glycero-3-phospho-(1'-sn-glycerol) + a fatty acid + H(+). The enzyme catalyses 1-hexadecanoyl-2-(9Z-octadecenoyl)-sn-glycero-3-phospho-(1'-sn-glycerol) + H2O = 1-hexadecanoyl-sn-glycero-3-phospho-(1'-sn-glycerol) + (9Z)-octadecenoate + H(+). The catalysed reaction is a 1,2-diacyl-sn-glycero-3-phospho-(1'-sn-glycerol) + H2O = 2-acyl-sn-glycero-3-phospho-(1'-sn-glycerol) + a fatty acid + H(+). It catalyses the reaction 1-hexadecanoyl-2-(9Z-octadecenoyl)-sn-glycero-3-phospho-(1'-sn-glycerol) + H2O = 2-(9Z-octadecenoyl)-sn-glycero-3-phospho-(1'-sn-glycerol) + hexadecanoate + H(+). Its activity is regulated as follows. Transacylase activity is completely inhibited by Triton X-100 and partially inhibited by heparin. Moderately activated by Mg(2+) and Ca(2+). Its function is as follows. Has dual calcium-independent phospholipase and O-acyltransferase activities with a potential role in glycerophospholipid homeostasis and remodeling of acyl groups of lipophilic alcohols present in acidic cellular compartments. Catalyzes hydrolysis of the ester bond of the fatty acyl group attached at sn-1 or sn-2 position of phospholipids (phospholipase A1 or A2 activity) and transfer it to the hydroxyl group at the first carbon of lipophilic alcohols (O-acyltransferase activity). Among preferred fatty acyl donors are phosphatidylcholines, phosphatidylethanolamines, phosphatidylglycerols and phosphatidylserines. Favors sn-2 over sn-1 deacylation of unsaturated fatty acyl groups of phosphatidylcholines, phosphatidylethanolamines, and phosphatidylglycerols. Among preferred fatty acyl acceptors are natural lipophilic alcohols including short-chain ceramide N-acetyl-sphingosine (C2 ceramide), alkylacylglycerols, monoacylglycerols, and acylethanolamides such as anandamide and oleoylethanolamide. Selectively hydrolyzes the sn-1 fatty acyl group of truncated oxidized phospholipids and may play a role in detoxification of reactive oxidized phospholipids during oxidative stress. Required for normal phospholipid degradation in alveolar macrophages with potential implications in the clearance of pulmonary surfactant, which is mainly composed of dipalmitoylphosphatidylcholine (1,2-dihexadecanoyl-sn-glycero-3-phosphocholine). Involved in the first step of bis(monoacylglycero)phosphate (BMP) de novo synthesis from phosphatidylglycerol (1,2-diacyl-sn-glycero-3-phospho-(1'-sn-glycerol), PG). BMP is an important player in cargo sorting and degradation, regulation of cellular cholesterol levels and intercellular communication. At neutral pH, hydrolyzes the sn-1 fatty acyl group of the lysophosphatidylcholines. This is Lysosomal phospholipase A and acyltransferase (PLA2G15) from Bos taurus (Bovine).